A 613-amino-acid polypeptide reads, in one-letter code: tRNA (uracil-5-)-methyltransferase homolog A (613 aa).

Positions Met1–Gln46 are disordered. Residues Phe63–Pro136 enclose the RRM domain. A coiled-coil region spans residues Tyr170–Leu200. Ser368 carries the post-translational modification Phosphoserine. The S-adenosyl-L-methionine site is built by Gln401, Glu451, and Asp500. Catalysis depends on Cys528, which acts as the Nucleophile. Glu571 serves as the catalytic Proton acceptor.

This sequence belongs to the class I-like SAM-binding methyltransferase superfamily. RNA M5U methyltransferase family. In terms of tissue distribution, widely expressed at low level. Expressed at higher level in proliferating cells.

It is found in the cytoplasm. The protein localises to the cytosol. The catalysed reaction is uridine(54) in tRNA + S-adenosyl-L-methionine = 5-methyluridine(54) in tRNA + S-adenosyl-L-homocysteine + H(+). It carries out the reaction a uridine in mRNA + S-adenosyl-L-methionine = a 5-methyluridine in mRNA + S-adenosyl-L-homocysteine + H(+). In terms of biological role, S-adenosyl-L-methionine-dependent methyltransferase that catalyzes the formation of 5-methyl-uridine in tRNAs and some mRNAs. Mainly catalyzes the methylation of uridine at position 54 (m5U54) in cytosolic tRNAs. Also able to mediate the formation of 5-methyl-uridine in some mRNAs. The sequence is that of tRNA (uracil-5-)-methyltransferase homolog A from Mus musculus (Mouse).